Here is a 466-residue protein sequence, read N- to C-terminus: Ribulose bisphosphate carboxylase large chain (466 aa).

Position 5 is an N6,N6,N6-trimethyllysine (Lys5). Substrate-binding residues include Asn114 and Thr164. Lys166 functions as the Proton acceptor in the catalytic mechanism. Residue Lys168 coordinates substrate. Positions 192, 194, and 195 each coordinate Mg(2+). Lys192 is subject to N6-carboxylysine. Catalysis depends on His285, which acts as the Proton acceptor. Substrate-binding residues include Arg286, His318, and Ser370.

This sequence belongs to the RuBisCO large chain family. Type I subfamily. In terms of assembly, heterohexadecamer of 8 large chains and 8 small chains; disulfide-linked. The disulfide link is formed within the large subunit homodimers. Mg(2+) is required as a cofactor. Post-translationally, the disulfide bond which can form in the large chain dimeric partners within the hexadecamer appears to be associated with oxidative stress and protein turnover.

The protein resides in the plastid. It localises to the chloroplast. The enzyme catalyses 2 (2R)-3-phosphoglycerate + 2 H(+) = D-ribulose 1,5-bisphosphate + CO2 + H2O. The catalysed reaction is D-ribulose 1,5-bisphosphate + O2 = 2-phosphoglycolate + (2R)-3-phosphoglycerate + 2 H(+). Functionally, ruBisCO catalyzes two reactions: the carboxylation of D-ribulose 1,5-bisphosphate, the primary event in carbon dioxide fixation, as well as the oxidative fragmentation of the pentose substrate in the photorespiration process. Both reactions occur simultaneously and in competition at the same active site. This chain is Ribulose bisphosphate carboxylase large chain, found in Oxalis dillenii (Gray-green wood sorrel).